Reading from the N-terminus, the 196-residue chain is uncharacterized protein (196 aa).

This is an uncharacterized protein from Mycoplasma pneumoniae (strain ATCC 29342 / M129 / Subtype 1) (Mycoplasmoides pneumoniae).